Consider the following 337-residue polypeptide: Inositol 2-dehydrogenase (337 aa).

This sequence belongs to the Gfo/Idh/MocA family. In terms of assembly, homotetramer.

The enzyme catalyses myo-inositol + NAD(+) = scyllo-inosose + NADH + H(+). Its function is as follows. Involved in the oxidation of myo-inositol (MI) to 2-keto-myo-inositol (2KMI or 2-inosose). This Burkholderia multivorans (strain ATCC 17616 / 249) protein is Inositol 2-dehydrogenase.